Consider the following 331-residue polypeptide: Thiamine thiazole synthase (331 aa).

Residues S82, 103–104 (EA), G111, and V176 each bind substrate. C210 bears the 2,3-didehydroalanine (Cys) mark. Residues D212, H242, M296, and 306–308 (RMG) contribute to the substrate site.

The protein belongs to the THI4 family. As to quaternary structure, homooctamer. The cofactor is Fe cation. During the catalytic reaction, a sulfide is transferred from Cys-210 to a reaction intermediate, generating a dehydroalanine residue.

The protein resides in the cytoplasm. It is found in the nucleus. The catalysed reaction is [ADP-thiazole synthase]-L-cysteine + glycine + NAD(+) = [ADP-thiazole synthase]-dehydroalanine + ADP-5-ethyl-4-methylthiazole-2-carboxylate + nicotinamide + 3 H2O + 2 H(+). Involved in biosynthesis of the thiamine precursor thiazole. Catalyzes the conversion of NAD and glycine to adenosine diphosphate 5-(2-hydroxyethyl)-4-methylthiazole-2-carboxylic acid (ADT), an adenylated thiazole intermediate. The reaction includes an iron-dependent sulfide transfer from a conserved cysteine residue of the protein to a thiazole intermediate. The enzyme can only undergo a single turnover, which suggests it is a suicide enzyme. May have additional roles in adaptation to various stress conditions and in DNA damage tolerance. The polypeptide is Thiamine thiazole synthase (Eremothecium gossypii (strain ATCC 10895 / CBS 109.51 / FGSC 9923 / NRRL Y-1056) (Yeast)).